Here is a 458-residue protein sequence, read N- to C-terminus: NADH-quinone oxidoreductase subunit N 1 (458 aa).

14 helical membrane passes run 12-32 (ALIP…AGLL), 37-57 (EVLV…IPSF), 70-90 (FLTI…LLVL), 101-121 (FNES…LVSA), 124-144 (LISF…LVGI), 159-179 (FMLG…IYGA), 199-219 (ILIG…LVPF), 230-250 (APTP…LGAF), 266-286 (SNFL…FALI), 293-313 (MLAY…IVGT), 321-341 (VAYM…VIAF), 361-381 (IAML…GFIV), 393-413 (GFTW…YYYL), and 438-458 (VAIL…LFLI).

It belongs to the complex I subunit 2 family. In terms of assembly, NDH-1 is composed of 14 different subunits. Subunits NuoA, H, J, K, L, M, N constitute the membrane sector of the complex.

Its subcellular location is the cell inner membrane. The catalysed reaction is a quinone + NADH + 5 H(+)(in) = a quinol + NAD(+) + 4 H(+)(out). Its function is as follows. NDH-1 shuttles electrons from NADH, via FMN and iron-sulfur (Fe-S) centers, to quinones in the respiratory chain. The immediate electron acceptor for the enzyme in this species is believed to be ubiquinone. Couples the redox reaction to proton translocation (for every two electrons transferred, four hydrogen ions are translocated across the cytoplasmic membrane), and thus conserves the redox energy in a proton gradient. In Thermodesulfovibrio yellowstonii (strain ATCC 51303 / DSM 11347 / YP87), this protein is NADH-quinone oxidoreductase subunit N 1.